Here is a 1356-residue protein sequence, read N- to C-terminus: Pleckstrin homology domain-containing family H member 1 (1356 aa).

The stretch at 27–172 (FRLQASKIRE…QDALEDLRMT (146 aa)) forms a coiled coil. Disordered stretches follow at residues 179–203 (VVPE…EQDS), 256–314 (HLQK…PKVR), and 354–414 (LHSP…PPLH). Composition is skewed to polar residues over residues 194-203 (PSDQPVEQDS), 256-265 (HLQKEGSPSQ), and 285-297 (VTAQ…GTKT). The stretch at 359–407 (SSKSEARAKVREEAEKMEMEALPPSGKQEERESLKSRRGELEDVELENK) forms a coiled coil. Basic and acidic residues-rich tracts occupy residues 362–377 (SEAR…KMEM) and 385–399 (KQEE…RGEL). The residue at position 451 (Ser451) is a Phosphoserine. 2 consecutive PH domains span residues 572-666 (ALEK…SLLK) and 681-790 (KPTV…VAAG). Residue Ser739 is modified to Phosphoserine. A MyTH4 domain is found at 826-980 (YSQEGLCASL…PSRMEVVSIL (155 aa)). The 337-residue stretch at 991 to 1327 (FSIPVHFANG…NHCSATVNLS (337 aa)) folds into the FERM domain.

The sequence is that of Pleckstrin homology domain-containing family H member 1 (Plekhh1) from Mus musculus (Mouse).